The following is a 122-amino-acid chain: NADH-quinone oxidoreductase subunit A (122 aa).

The next 3 membrane-spanning stretches (helical) occupy residues 10–30 (MIVL…LTLG), 66–86 (IFAL…PWAV), and 91–111 (LGLF…VGLA).

The protein belongs to the complex I subunit 3 family. In terms of assembly, NDH-1 is composed of 14 different subunits. Subunits NuoA, H, J, K, L, M, N constitute the membrane sector of the complex.

The protein localises to the cell membrane. The enzyme catalyses a quinone + NADH + 5 H(+)(in) = a quinol + NAD(+) + 4 H(+)(out). Its function is as follows. NDH-1 shuttles electrons from NADH, via FMN and iron-sulfur (Fe-S) centers, to quinones in the respiratory chain. The immediate electron acceptor for the enzyme in this species is believed to be a menaquinone. Couples the redox reaction to proton translocation (for every two electrons transferred, four hydrogen ions are translocated across the cytoplasmic membrane), and thus conserves the redox energy in a proton gradient. This chain is NADH-quinone oxidoreductase subunit A, found in Bacillus cereus (strain ATCC 14579 / DSM 31 / CCUG 7414 / JCM 2152 / NBRC 15305 / NCIMB 9373 / NCTC 2599 / NRRL B-3711).